We begin with the raw amino-acid sequence, 209 residues long: Imidazole glycerol phosphate synthase subunit HisH (209 aa).

The 205-residue stretch at Met-1 to Ser-205 folds into the Glutamine amidotransferase type-1 domain. The active-site Nucleophile is the Cys-79. Residues His-180 and Glu-182 contribute to the active site.

As to quaternary structure, heterodimer of HisH and HisF.

It is found in the cytoplasm. It catalyses the reaction 5-[(5-phospho-1-deoxy-D-ribulos-1-ylimino)methylamino]-1-(5-phospho-beta-D-ribosyl)imidazole-4-carboxamide + L-glutamine = D-erythro-1-(imidazol-4-yl)glycerol 3-phosphate + 5-amino-1-(5-phospho-beta-D-ribosyl)imidazole-4-carboxamide + L-glutamate + H(+). The catalysed reaction is L-glutamine + H2O = L-glutamate + NH4(+). The protein operates within amino-acid biosynthesis; L-histidine biosynthesis; L-histidine from 5-phospho-alpha-D-ribose 1-diphosphate: step 5/9. IGPS catalyzes the conversion of PRFAR and glutamine to IGP, AICAR and glutamate. The HisH subunit catalyzes the hydrolysis of glutamine to glutamate and ammonia as part of the synthesis of IGP and AICAR. The resulting ammonia molecule is channeled to the active site of HisF. The protein is Imidazole glycerol phosphate synthase subunit HisH of Bacillus cereus (strain B4264).